Reading from the N-terminus, the 471-residue chain is MPN domain-containing protein (471 aa).

Low complexity predominate over residues 1–10 (MAAPEPLSPA). The interval 1-63 (MAAPEPLSPA…GGGGAGAGGC (63 aa)) is disordered. Position 2 is an N-acetylalanine (Ala2). Ser8 is modified (phosphoserine). The span at 16 to 29 (EAPEEDEDEAEAED) shows a compositional bias: acidic residues. A compositionally biased stretch (gly residues) spans 36-63 (GAGGGRSGGGGSSVSGGGGGGGAGAGGC). Residues 71 to 166 (TRRAVTLRVL…KYKATWLRLH (96 aa)) enclose the RAMA domain. Ser123, Ser125, and Trp145 together coordinate DNA. Residues 170-229 (TPATAADESPASEGEEEELLMEEEEEDVLAGVSAEDKSRRPLGKSPSEPAHPEATTPGKR) are disordered. 2 positions are modified to phosphoserine: Ser178 and Ser181. The span at 182–197 (EGEEEELLMEEEEEDV) shows a compositional bias: acidic residues. The 136-residue stretch at 272–407 (VAVSSNVLFL…PESKISPFWV (136 aa)) folds into the MPN domain. Residues His349, His351, and Asp362 each coordinate Zn(2+). The JAMM motif motif lies at 349–362 (HSHPHSPALPSLQD).

The protein belongs to the peptidase M67 family. As to quaternary structure, monomer. Mainly monomoric, but when binds to dsDNA, forms homotetramer assembled into two homodimers. May interact with histones; this interaction is facilitated by dsDNA binding. Post-translationally, degraded following binding to N(6)-methyladenosine methylated DNA (m6A).

Functionally, probable protease. Acts as a sensor of N(6)-methyladenosine methylation on DNA (m6A): recognizes and binds m6A DNA, leading to its degradation. Binds only double strand DNA (dsDNA) in a sequence-independent manner. This chain is MPN domain-containing protein, found in Homo sapiens (Human).